A 145-amino-acid polypeptide reads, in one-letter code: Large ribosomal subunit protein bL19 (145 aa).

This sequence belongs to the bacterial ribosomal protein bL19 family.

In terms of biological role, this protein is located at the 30S-50S ribosomal subunit interface and may play a role in the structure and function of the aminoacyl-tRNA binding site. The polypeptide is Large ribosomal subunit protein bL19 (Brucella abortus (strain S19)).